Reading from the N-terminus, the 360-residue chain is Membrane-bound lytic murein transglycosylase C (360 aa).

A signal peptide spans 1 to 16 (MKKYLALALIAPLLVS). A lipid anchor (N-palmitoyl cysteine) is attached at C17. A lipid anchor (S-diacylglycerol cysteine) is attached at C17.

It belongs to the transglycosylase Slt family.

Its subcellular location is the cell outer membrane. The enzyme catalyses Exolytic cleavage of the (1-&gt;4)-beta-glycosidic linkage between N-acetylmuramic acid (MurNAc) and N-acetylglucosamine (GlcNAc) residues in peptidoglycan, from either the reducing or the non-reducing ends of the peptidoglycan chains, with concomitant formation of a 1,6-anhydrobond in the MurNAc residue.. Its function is as follows. Murein-degrading enzyme. May play a role in recycling of muropeptides during cell elongation and/or cell division. This Klebsiella pneumoniae subsp. pneumoniae (strain ATCC 700721 / MGH 78578) protein is Membrane-bound lytic murein transglycosylase C.